Consider the following 779-residue polypeptide: Ribosome-releasing factor 2, mitochondrial (779 aa).

The 286-residue stretch at alanine 68–glutamate 353 folds into the tr-type G domain. GTP is bound by residues alanine 77 to threonine 84, aspartate 141 to histidine 145, and asparagine 195 to aspartate 198.

This sequence belongs to the TRAFAC class translation factor GTPase superfamily. Classic translation factor GTPase family. EF-G/EF-2 subfamily.

The protein localises to the mitochondrion. The catalysed reaction is GTP + H2O = GDP + phosphate + H(+). In terms of biological role, mitochondrial GTPase that mediates the disassembly of ribosomes from messenger RNA at the termination of mitochondrial protein biosynthesis. Acts in collaboration with MRRF. GTP hydrolysis follows the ribosome disassembly and probably occurs on the ribosome large subunit. Not involved in the GTP-dependent ribosomal translocation step during translation elongation. This chain is Ribosome-releasing factor 2, mitochondrial (Gfm2), found in Mus musculus (Mouse).